The chain runs to 372 residues: 3-dehydroquinate synthase (372 aa).

NAD(+) is bound by residues 116–120 (GVVGD), 140–141 (TT), Lys-153, Lys-162, and 180–183 (TLKT). The Zn(2+) site is built by Glu-195, His-260, and His-277.

It belongs to the sugar phosphate cyclases superfamily. Dehydroquinate synthase family. NAD(+) serves as cofactor. It depends on Co(2+) as a cofactor. Requires Zn(2+) as cofactor.

The protein localises to the cytoplasm. The catalysed reaction is 7-phospho-2-dehydro-3-deoxy-D-arabino-heptonate = 3-dehydroquinate + phosphate. The protein operates within metabolic intermediate biosynthesis; chorismate biosynthesis; chorismate from D-erythrose 4-phosphate and phosphoenolpyruvate: step 2/7. Its function is as follows. Catalyzes the conversion of 3-deoxy-D-arabino-heptulosonate 7-phosphate (DAHP) to dehydroquinate (DHQ). This chain is 3-dehydroquinate synthase, found in Prochlorococcus marinus (strain MIT 9313).